A 484-amino-acid polypeptide reads, in one-letter code: ETS translocation variant 4 (484 aa).

A Glycyl lysine isopeptide (Lys-Gly) (interchain with G-Cter in SUMO2) cross-link involves residue K6. The tract at residues 90-115 is disordered; that stretch reads SPTTRIKKEPQSPRTDPALSCSRKPP. K96 participates in a covalent cross-link: Glycyl lysine isopeptide (Lys-Gly) (interchain with G-Cter in SUMO). A Phosphoserine modification is found at S101. K139 is covalently cross-linked (Glycyl lysine isopeptide (Lys-Gly) (interchain with G-Cter in SUMO2)). Residues S140, S149, and S214 each carry the phosphoserine modification. Residues K226 and K260 each participate in a glycyl lysine isopeptide (Lys-Gly) (interchain with G-Cter in SUMO) cross-link. K322 is covalently cross-linked (Glycyl lysine isopeptide (Lys-Gly) (interchain with G-Cter in SUMO2)). Positions 341–421 form a DNA-binding region, ETS; that stretch reads LQLWQFLVAL…AGERYVYKFV (81 aa).

The protein belongs to the ETS family. Sumoylated; enhanced upon ERK/MAP kinase pathway activation, it positively regulates the transcriptional activator capacity. Sumoylation at Lys-96 probably requires phosphorylation at Ser-101. Transiently polysumoylated and desumoylated by SENP1. Sumoylation is a prerequisite to polyubiquitination which in turn increases proteasomal-mediated degradation. Probably polyubiquitinated by RNF4 and deubiquitinated by USP2. In terms of tissue distribution, expressed in keratinocytes.

It localises to the nucleus. Its function is as follows. Transcriptional activator. May play a role in keratinocyte differentiation. In terms of biological role, (Microbial infection) Binds to the enhancer of the adenovirus E1A gene and acts as a transcriptional activator; the core-binding sequence is 5'-[AC]GGA[AT]GT-3'. This Homo sapiens (Human) protein is ETS translocation variant 4 (ETV4).